Consider the following 338-residue polypeptide: Lipoate-protein ligase A (338 aa).

In terms of domain architecture, BPL/LPL catalytic spans Pro29 to Val216. ATP is bound by residues Arg71, Gly76 to Phe79, and Lys134. (R)-lipoate is bound at residue Lys134.

Belongs to the LplA family. Monomer.

It is found in the cytoplasm. The catalysed reaction is L-lysyl-[lipoyl-carrier protein] + (R)-lipoate + ATP = N(6)-[(R)-lipoyl]-L-lysyl-[lipoyl-carrier protein] + AMP + diphosphate + H(+). It participates in protein modification; protein lipoylation via exogenous pathway; protein N(6)-(lipoyl)lysine from lipoate: step 1/2. The protein operates within protein modification; protein lipoylation via exogenous pathway; protein N(6)-(lipoyl)lysine from lipoate: step 2/2. Catalyzes both the ATP-dependent activation of exogenously supplied lipoate to lipoyl-AMP and the transfer of the activated lipoyl onto the lipoyl domains of lipoate-dependent enzymes. This Escherichia coli O81 (strain ED1a) protein is Lipoate-protein ligase A.